We begin with the raw amino-acid sequence, 900 residues long: Alanine--tRNA ligase (900 aa).

Zn(2+) is bound by residues H580, H584, C683, and H687.

It belongs to the class-II aminoacyl-tRNA synthetase family. The cofactor is Zn(2+).

The protein resides in the cytoplasm. It carries out the reaction tRNA(Ala) + L-alanine + ATP = L-alanyl-tRNA(Ala) + AMP + diphosphate. Functionally, catalyzes the attachment of alanine to tRNA(Ala) in a two-step reaction: alanine is first activated by ATP to form Ala-AMP and then transferred to the acceptor end of tRNA(Ala). Also edits incorrectly charged Ser-tRNA(Ala) and Gly-tRNA(Ala) via its editing domain. The polypeptide is Alanine--tRNA ligase (Mycolicibacterium paratuberculosis (strain ATCC BAA-968 / K-10) (Mycobacterium paratuberculosis)).